Consider the following 494-residue polypeptide: UPF0371 protein stu1377 (494 aa).

It belongs to the UPF0371 family.

The chain is UPF0371 protein stu1377 from Streptococcus thermophilus (strain ATCC BAA-250 / LMG 18311).